The following is a 162-amino-acid chain: Caveolin-2 (162 aa).

The Cytoplasmic portion of the chain corresponds to 1 to 86; sequence MGLETEKADV…FEISKYIIYK (86 aa). Phosphotyrosine; by SRC is present on Tyr19. 2 positions are modified to phosphoserine: Ser20 and Ser23. A Phosphotyrosine; by SRC modification is found at Tyr27. Positions 87–107 form an intramembrane region, helical; that stretch reads FLTVFLAIPLAFAAGILFATL. At 108–162 the chain is on the cytoplasmic side; that stretch reads SCLHIWITMPFVKTCLMVLPSVQTIWKSVTDVAIAPLCTSVGRSFSSVSLQLSHD.

This sequence belongs to the caveolin family. In terms of assembly, monomer or homodimer. Interacts with CAV1; the interaction forms a stable heterooligomeric complex that is required for targeting to lipid rafts and for caveolae formation. Tyrosine phosphorylated forms do not form heterooligomers with the Tyr-19-phosphorylated form existing as a monomer or dimer, and the Tyr-27-form as a monomer only. Interacts (tyrosine phosphorylated form) with the SH2 domain-containing proteins, RASA1, NCK1 and SRC. Interacts (tyrosine phosphorylated form) with INSR, the interaction (Tyr-27-phosphorylated form) is increased on insulin stimulation. Interacts (Tyr-19 phosphorylated form) with MAPK1 (phosphorylated form); the interaction, promoted by insulin, leads to nuclear location and MAPK1 activation. Interacts with STAT3; the interaction is increased on insulin-induced tyrosine phosphorylation leading to STAT activation. In terms of processing, phosphorylated on serine and tyrosine residues. CAV1 promotes phosphorylation on Ser-23 which then targets the complex to the plasma membrane, lipid rafts and caveolae. Phosphorylation on both Tyr-19 and Tyr-27 is required for insulin-induced 'Ser-727' phosphorylation of STAT3 and its activation. Phosphorylation on Tyr-19 is required for insulin-induced phosphorylation of MAPK1 and DNA binding of STAT3. Tyrosine phosphorylation is induced by both EGF and insulin.

It is found in the nucleus. Its subcellular location is the cytoplasm. The protein localises to the golgi apparatus membrane. The protein resides in the cell membrane. It localises to the membrane. It is found in the caveola. May act as a scaffolding protein within caveolar membranes. Interacts directly with G-protein alpha subunits and can functionally regulate their activity. Acts as an accessory protein in conjunction with CAV1 in targeting to lipid rafts and driving caveolae formation. Positive regulator of cellular mitogenesis of the MAPK signaling pathway. Required for the insulin-stimulated nuclear translocation and activation of MAPK1 and STAT3, and the subsequent regulation of cell cycle progression. The protein is Caveolin-2 (CAV2) of Dasypus novemcinctus (Nine-banded armadillo).